A 966-amino-acid chain; its full sequence is Receptor protein-tyrosine kinase CEPR1 (966 aa).

Residues 1 to 22 form the signal peptide; that stretch reads MRLKNFPFFVLFFFFCFNSNQS. Residues 23-592 lie on the Extracellular side of the membrane; that stretch reads WGLMSSNQQP…QEPHGKKKLS (570 aa). Asparagine 61 carries N-linked (GlcNAc...) asparagine glycosylation. 20 LRR repeats span residues 70–94, 95–120, 122–144, 145–168, 170–194, 195–218, 219–242, 245–267, 268–291, 292–315, 317–339, 341–363, 365–386, 387–411, 412–435, 437–459, 460–483, 484–507, 508–531, and 533–554; these read QGLV…VCSY, FPNL…TIPN, SLLR…FSQM, KSLR…IFNL, DLEY…VSKL, TKLT…IGNL, TSLV…IGNL, LRQL…IGNL, KNLT…ICSL, PNLR…LGNS, TLKI…LGSS, PMIA…VCKS, KLLY…TYGS, CKTL…VMSL, PHVS…IGNA, NLSE…LSHS, TNLV…VGRL, RKLN…LSNL, KSLN…LSEL, and PTSI…LIRG. N-linked (GlcNAc...) asparagine glycans are attached at residues asparagine 109, asparagine 120, asparagine 128, and asparagine 167. Residues asparagine 217 and asparagine 241 are each glycosylated (N-linked (GlcNAc...) asparagine). N-linked (GlcNAc...) asparagine glycans are attached at residues asparagine 269 and asparagine 301. Asparagine 437 carries N-linked (GlcNAc...) asparagine glycosylation. N-linked (GlcNAc...) asparagine glycans are attached at residues asparagine 527 and asparagine 537. Residues 593–613 traverse the membrane as a helical segment; the sequence is SIWAILVSVFILVLGVIMFYL. The Cytoplasmic portion of the chain corresponds to 614–966; it reads RQRMSKNRAV…VSDHLTQTRL (353 aa). A Protein kinase domain is found at 656 to 934; it reads LVDKNIVGHG…TMNEVVQLLI (279 aa). ATP-binding positions include 662-670 and lysine 684; that span reads VGHGGSGTV. A phosphotyrosine mark is found at tyrosine 738 and tyrosine 775. Residue aspartate 788 is the Proton acceptor of the active site. Phosphotyrosine occurs at positions 831 and 838. Residues 937–966 form a disordered region; that stretch reads TPQGGPDMTSKPTTKIKDSIVSDHLTQTRL.

Belongs to the protein kinase superfamily. Ser/Thr protein kinase family. As to quaternary structure, interacts with the root-derived peptides CEP1, CEP3 and CEP5. Expressed in the vasculature, especially in phloem and procambium regions, of stems, leaves, cotyledons, sepals, pedals, pedicels, hypocotyls and roots (in primary and lateral roots, but not in root tips). Expressed in the root from the basal meristem onward. Present in the phloem pole pericycle and in the adjacent phloem.

The protein resides in the cell membrane. It catalyses the reaction L-tyrosyl-[protein] + ATP = O-phospho-L-tyrosyl-[protein] + ADP + H(+). Functionally, receptor kinase involved in the perception of C-terminally encoded plant signaling peptide (CEP) and subsequent regulation of root and shoot development. Required for xylem and phloem cell files morphology and organization, probably by preventing ectopic lignification in phloem cells. Together with CEPR2, mediates systemic nitrogen (N)-demand signaling upon the perception of root-derived peptides (e.g. CEP1) via the up-regulation of genes involved in N uptake and assimilation pathways. Positively regulates lateral root initiation and development; probably repressed by the signaling peptide CEP5. In Arabidopsis thaliana (Mouse-ear cress), this protein is Receptor protein-tyrosine kinase CEPR1.